A 466-amino-acid polypeptide reads, in one-letter code: UDP-glycosyltransferase 91B1 (466 aa).

Residues Thr286, 342 to 344 (VPQ), 359 to 367 (HCGWGSAVE), and 381 to 384 (NLDQ) contribute to the UDP-alpha-D-glucose site.

The protein belongs to the UDP-glycosyltransferase family.

This is UDP-glycosyltransferase 91B1 (UGT91B1) from Arabidopsis thaliana (Mouse-ear cress).